A 465-amino-acid chain; its full sequence is Iron-sulfur cluster assembly SufBD family protein SH2035 (465 aa).

This sequence belongs to the iron-sulfur cluster assembly SufBD family.

This Staphylococcus haemolyticus (strain JCSC1435) protein is Iron-sulfur cluster assembly SufBD family protein SH2035.